The following is a 529-amino-acid chain: Ribonuclease Y (529 aa).

A helical transmembrane segment spans residues 4–24 (GLIYISLEVLVACLITALVMY). One can recognise a KH domain in the interval 216-297 (LTTRIALPCS…NRIEEVYHRV (82 aa)). In terms of domain architecture, HD spans 342 to 435 (ALQHSKEVAL…VCAADALSAG (94 aa)).

This sequence belongs to the RNase Y family.

Its subcellular location is the cell membrane. Functionally, endoribonuclease that initiates mRNA decay. The sequence is that of Ribonuclease Y from Helicobacter pylori (strain ATCC 700392 / 26695) (Campylobacter pylori).